The following is a 339-amino-acid chain: Protein FAM50A (339 aa).

The tract at residues 1-31 (MAQYKGAASEAGRAMHLMKKREKQREQMEQM) is disordered. Position 2 is an N-acetylalanine (Ala-2). Lys-100 participates in a covalent cross-link: Glycyl lysine isopeptide (Lys-Gly) (interchain with G-Cter in SUMO2). A disordered region spans residues 150 to 177 (TTKKKKLGKNPDVDTSFLPDRDREEEEN). Positions 152-155 (KKKK) match the Nuclear localization signal motif. A compositionally biased stretch (basic and acidic residues) spans 168–177 (PDRDREEEEN).

Belongs to the FAM50 family. Interacts with EFTUD2, a component of the spliceosome U5 complex. Interacts with DDX41, a component of the spliceosome C complex. Widely expressed in embryonic and adult tissues.

It localises to the nucleus. Functionally, probably involved in the regulation of pre-mRNA splicing. The protein is Protein FAM50A (Fam50a) of Mus musculus (Mouse).